The primary structure comprises 453 residues: Allantoinase (453 aa).

The Zn(2+) site is built by H59, H61, K146, H186, H242, and D315. At K146 the chain carries N6-carboxylysine.

This sequence belongs to the metallo-dependent hydrolases superfamily. Allantoinase family. In terms of assembly, homotetramer. The cofactor is Zn(2+). Carboxylation allows a single lysine to coordinate two zinc ions.

The enzyme catalyses (S)-allantoin + H2O = allantoate + H(+). It participates in nitrogen metabolism; (S)-allantoin degradation; allantoate from (S)-allantoin: step 1/1. In terms of biological role, catalyzes the conversion of allantoin (5-ureidohydantoin) to allantoic acid by hydrolytic cleavage of the five-member hydantoin ring. This Escherichia coli (strain K12 / MC4100 / BW2952) protein is Allantoinase.